Here is a 480-residue protein sequence, read N- to C-terminus: tRNA (guanine(37)-N(1))-methyltransferase (480 aa).

Residues 1-18 (MAAVWRRSARLFILLQRH) constitute a mitochondrion transit peptide. S-adenosyl-L-methionine contacts are provided by residues H273, 311-312 (DL), 339-340 (DG), and N367. The interval 458–480 (HTQDRDTSEEPCPKKQKCEDSTN) is disordered.

It belongs to the class I-like SAM-binding methyltransferase superfamily. TRM5/TYW2 family. As to quaternary structure, monomer.

It is found in the mitochondrion matrix. The protein resides in the nucleus. The protein localises to the cytoplasm. It carries out the reaction guanosine(37) in tRNA + S-adenosyl-L-methionine = N(1)-methylguanosine(37) in tRNA + S-adenosyl-L-homocysteine + H(+). Its function is as follows. Involved in mitochondrial tRNA methylation. Specifically methylates the N1 position of guanosine-37 in various tRNAs. Methylation is not dependent on the nature of the nucleoside 5' of the target nucleoside. This is the first step in the biosynthesis of wybutosine (yW), a modified base adjacent to the anticodon of tRNAs and required for accurate decoding. This is tRNA (guanine(37)-N(1))-methyltransferase (trmt5) from Danio rerio (Zebrafish).